Reading from the N-terminus, the 405-residue chain is MENIMTLPKIKQVRAWFTGGATAEKGAGGGDYHDQGANHWIDDHIATPMSKYRDYEQSRQSFGINVLGTLVVEVEAENGQTGFAVSTAGEMGCFIVEKHLNRFIEGKCVSDIKLIHDQMLNATLYYSGSGGLVMNTISCVDLALWDLFGKVVGLPVYKLLGGAVRDEIQFYATGARPDLAKEMGFIGGKMPTHWGPHDGDAGIRKDAAMVADMREKCGEDFWLMLDCWMSQDVNYATKLAHACAPYNLKWIEECLPPQQYEGYRELKRNAPVGMMVTSGEHHGTLQSFRTLSETGIDIMQPDVGWCGGLTTLVEIAAIAKSRGQLVVPHGSSVYSHHAVITFTNTPFSEFLMTSPDCSTMRPQFDPILLNEPVPVNGRIHKSVLDKPGFGVELNRDCNLKRPYSH.

2 residues coordinate substrate: His33 and Arg59. Mg(2+)-binding residues include Asp226, Glu252, and Glu280. The active-site Proton acceptor is the His329. Residue Glu349 coordinates substrate.

The protein belongs to the mandelate racemase/muconate lactonizing enzyme family. RhamD subfamily. In terms of assembly, homooctamer; tetramer of dimers. Requires Mg(2+) as cofactor.

It catalyses the reaction L-rhamnonate = 2-dehydro-3-deoxy-L-rhamnonate + H2O. In terms of biological role, catalyzes the dehydration of L-rhamnonate to 2-keto-3-deoxy-L-rhamnonate (KDR). This is L-rhamnonate dehydratase from Shigella boydii serotype 4 (strain Sb227).